Here is a 363-residue protein sequence, read N- to C-terminus: UDP-N-acetylglucosamine--N-acetylmuramyl-(pentapeptide) pyrophosphoryl-undecaprenol N-acetylglucosamine transferase (363 aa).

UDP-N-acetyl-alpha-D-glucosamine is bound by residues 10–12, Asn124, Ser195, Ile250, and Gln295; that span reads TGG.

The protein belongs to the glycosyltransferase 28 family. MurG subfamily.

It localises to the cell membrane. The catalysed reaction is di-trans,octa-cis-undecaprenyl diphospho-N-acetyl-alpha-D-muramoyl-L-alanyl-D-glutamyl-meso-2,6-diaminopimeloyl-D-alanyl-D-alanine + UDP-N-acetyl-alpha-D-glucosamine = di-trans,octa-cis-undecaprenyl diphospho-[N-acetyl-alpha-D-glucosaminyl-(1-&gt;4)]-N-acetyl-alpha-D-muramoyl-L-alanyl-D-glutamyl-meso-2,6-diaminopimeloyl-D-alanyl-D-alanine + UDP + H(+). The protein operates within cell wall biogenesis; peptidoglycan biosynthesis. Cell wall formation. Catalyzes the transfer of a GlcNAc subunit on undecaprenyl-pyrophosphoryl-MurNAc-pentapeptide (lipid intermediate I) to form undecaprenyl-pyrophosphoryl-MurNAc-(pentapeptide)GlcNAc (lipid intermediate II). The chain is UDP-N-acetylglucosamine--N-acetylmuramyl-(pentapeptide) pyrophosphoryl-undecaprenol N-acetylglucosamine transferase from Listeria monocytogenes serovar 1/2a (strain ATCC BAA-679 / EGD-e).